The sequence spans 436 residues: GTPase Der (436 aa).

EngA-type G domains follow at residues 3–168 and 177–352; these read PLVA…EEKS and IRLA…EQRS. GTP is bound by residues 9-16, 56-60, 120-123, 183-190, 230-234, and 295-298; these read GRPNVGKS, DTGGY, NKVE, DTAGL, and NKWD. A KH-like domain is found at 353-436; sequence QQITTSDLNR…VPFSLRFMQK (84 aa).

It belongs to the TRAFAC class TrmE-Era-EngA-EngB-Septin-like GTPase superfamily. EngA (Der) GTPase family. As to quaternary structure, associates with the 50S ribosomal subunit.

Its function is as follows. GTPase that plays an essential role in the late steps of ribosome biogenesis. This is GTPase Der from Prosthecochloris aestuarii (strain DSM 271 / SK 413).